The following is a 538-amino-acid chain: Phosphoenolpyruvate carboxykinase (ATP) (538 aa).

Residues Arg-62, Tyr-203, and Lys-209 each coordinate substrate. ATP-binding positions include Lys-209, His-228, and 244-252; that span reads GLSGTGKTT. 2 residues coordinate Mn(2+): Lys-209 and His-228. Asp-265 is a Mn(2+) binding site. ATP-binding positions include Glu-293, Arg-329, 445 to 446, and Thr-451; that span reads RI. Arg-329 is a binding site for substrate.

The protein belongs to the phosphoenolpyruvate carboxykinase (ATP) family. As to quaternary structure, monomer. Mn(2+) serves as cofactor.

The protein localises to the cytoplasm. It catalyses the reaction oxaloacetate + ATP = phosphoenolpyruvate + ADP + CO2. It participates in carbohydrate biosynthesis; gluconeogenesis. Involved in the gluconeogenesis. Catalyzes the conversion of oxaloacetate (OAA) to phosphoenolpyruvate (PEP) through direct phosphoryl transfer between the nucleoside triphosphate and OAA. This Haemophilus ducreyi (strain 35000HP / ATCC 700724) protein is Phosphoenolpyruvate carboxykinase (ATP).